The chain runs to 445 residues: Phosphoglucosamine mutase (445 aa).

Serine 102 functions as the Phosphoserine intermediate in the catalytic mechanism. Residues serine 102, aspartate 241, aspartate 243, and aspartate 245 each coordinate Mg(2+). Serine 102 carries the phosphoserine modification.

The protein belongs to the phosphohexose mutase family. The cofactor is Mg(2+). In terms of processing, activated by phosphorylation.

The enzyme catalyses alpha-D-glucosamine 1-phosphate = D-glucosamine 6-phosphate. Functionally, catalyzes the conversion of glucosamine-6-phosphate to glucosamine-1-phosphate. This chain is Phosphoglucosamine mutase, found in Rhodococcus opacus (strain B4).